Reading from the N-terminus, the 492-residue chain is V-type proton ATPase subunit B 2 (492 aa).

The protein belongs to the ATPase alpha/beta chains family. V-ATPase is a heteromultimeric enzyme composed of a peripheral catalytic V1 complex (main components: subunits A, B, C, D, E, and F) attached to an integral membrane V0 proton pore complex (main component: the proteolipid protein).

Functionally, non-catalytic subunit of the peripheral V1 complex of vacuolar ATPase. V-ATPase is responsible for acidifying a variety of intracellular compartments in eukaryotic cells. This chain is V-type proton ATPase subunit B 2, found in Acetabularia acetabulum (Mermaid's wine glass).